The following is a 428-amino-acid chain: Serine--tRNA ligase (428 aa).

L-serine is bound at residue 235-237 (TAE). Position 266–268 (266–268 (RSE)) interacts with ATP. Glutamate 289 serves as a coordination point for L-serine. Residue 353–356 (EISS) coordinates ATP. Serine 389 contributes to the L-serine binding site.

The protein belongs to the class-II aminoacyl-tRNA synthetase family. Type-1 seryl-tRNA synthetase subfamily. Homodimer. The tRNA molecule binds across the dimer.

The protein resides in the cytoplasm. It carries out the reaction tRNA(Ser) + L-serine + ATP = L-seryl-tRNA(Ser) + AMP + diphosphate + H(+). The catalysed reaction is tRNA(Sec) + L-serine + ATP = L-seryl-tRNA(Sec) + AMP + diphosphate + H(+). It participates in aminoacyl-tRNA biosynthesis; selenocysteinyl-tRNA(Sec) biosynthesis; L-seryl-tRNA(Sec) from L-serine and tRNA(Sec): step 1/1. Catalyzes the attachment of serine to tRNA(Ser). Is also able to aminoacylate tRNA(Sec) with serine, to form the misacylated tRNA L-seryl-tRNA(Sec), which will be further converted into selenocysteinyl-tRNA(Sec). This Shewanella baltica (strain OS223) protein is Serine--tRNA ligase.